The primary structure comprises 64 residues: UPF0434 protein Bmul_0750/BMULJ_02510 (64 aa).

It belongs to the UPF0434 family.

In Burkholderia multivorans (strain ATCC 17616 / 249), this protein is UPF0434 protein Bmul_0750/BMULJ_02510.